The primary structure comprises 199 residues: MNYYSTSIAKLIEELSKLPGIGPKTAQRLAFFIINMPLEEVKSLSQAIIDAKEKIKYCRICYNITDTEVCNICSDKERDHSLICVVSHPMDVVAMEKIREYKGVYHVLHGVISPIEGVGPEDIKIKELLDRVKNGNVKEVILATNPDIEGEATAMYIAKLLKPLGIKVTRIAHGVPVGGDLEYTDVVTLSRALEGRREL.

Residues 58-73 form a C4-type zinc finger; the sequence is CRICYNITDTEVCNIC. A Toprim domain is found at 81 to 176; that stretch reads SLICVVSHPM…KVTRIAHGVP (96 aa).

This sequence belongs to the RecR family.

Functionally, may play a role in DNA repair. It seems to be involved in an RecBC-independent recombinational process of DNA repair. It may act with RecF and RecO. This Thermoanaerobacter pseudethanolicus (strain ATCC 33223 / 39E) (Clostridium thermohydrosulfuricum) protein is Recombination protein RecR.